The chain runs to 474 residues: MYLMITAMKAQIESIPCKICGDKSSGIHYGVITCEGCKGFFRRSQQGTVSYSCPRQKSCLIDRTSRNRCQHCRLQKCLAVGMSRDAVKFGRMSKKQRDSLFAEVQKHRQQQQDDKTGDESEKNQESQAPGEAEPLTPSYALSSSGVTEIPDDLSGYVNGQTQEEGKADSAIGGFYLDIQPSPDQSGLDMDGIKLEPVCDLSSDSGLDQYCCYSNGDASPPHDDLEHLSENICKSHLETCQYLREELQPSNWQTVLQSNLEAYQKKSQEDMWQLCAVKVTEAVQYVVEFAKRIDGFMELCQNDQIVLLKAGSLEVVFVRMCRAYNSQNNTVFFDSKYAGPEVFKALGCDDLISSVFEFAKSLNSLQLSEDEIGLFSAYVLMSADRSWLQEKTRVEKLQQKIKIALQNLLQKNKRDEGILTKLVCKVSTVRMLCRRHMEKLSAFRALYPEMVHTRFPPLYKELFGSDFEQILPQEA.

The segment at residues 14 to 89 is a DNA-binding region (nuclear receptor); the sequence is SIPCKICGDK…VGMSRDAVKF (76 aa). 2 consecutive NR C4-type zinc fingers follow at residues 17–37 and 53–72; these read CKICGDKSSGIHYGVITCEGC and CPRQKSCLIDRTSRNRCQHC. Residues 98 to 124 are compositionally biased toward basic and acidic residues; it reads DSLFAEVQKHRQQQQDDKTGDESEKNQ. A disordered region spans residues 98-144; the sequence is DSLFAEVQKHRQQQQDDKTGDESEKNQESQAPGEAEPLTPSYALSSS. An NR LBD domain is found at 223–461; the sequence is DLEHLSENIC…TRFPPLYKEL (239 aa). An AF-2 region spans residues 450–461; sequence VHTRFPPLYKEL.

This sequence belongs to the nuclear hormone receptor family.

The protein resides in the nucleus. In terms of biological role, nuclear receptor that binds DNA as a monomer to ROR response elements (RORE). Required for proper cerebellum development. The polypeptide is Nuclear receptor ROR-alpha B (rorab) (Danio rerio (Zebrafish)).